A 553-amino-acid chain; its full sequence is Ubiquitin carboxyl-terminal hydrolase 17-like protein 15 (553 aa).

The 296-residue stretch at alanine 80 to lysine 375 folds into the USP domain. Catalysis depends on cysteine 89, which acts as the Nucleophile. Histidine 334 (proton acceptor) is an active-site residue. Basic and acidic residues-rich tracts occupy residues serine 382–arginine 392 and aspartate 398–proline 413. Disordered stretches follow at residues serine 382 to proline 413 and serine 491 to arginine 524. Polar residues predominate over residues histidine 496–leucine 505. Residues glycine 510–arginine 524 show a composition bias toward basic residues.

It belongs to the peptidase C19 family. USP17 subfamily.

It localises to the nucleus. It is found in the endoplasmic reticulum. It carries out the reaction Thiol-dependent hydrolysis of ester, thioester, amide, peptide and isopeptide bonds formed by the C-terminal Gly of ubiquitin (a 76-residue protein attached to proteins as an intracellular targeting signal).. Deubiquitinating enzyme that removes conjugated ubiquitin from specific proteins to regulate different cellular processes that may include cell proliferation, progression through the cell cycle, apoptosis, cell migration, and the cellular response to viral infection. The protein is Ubiquitin carboxyl-terminal hydrolase 17-like protein 15 (USP17L15) of Homo sapiens (Human).